The following is a 398-amino-acid chain: Riboflavin biosynthesis protein RibBA (398 aa).

Residues 1–199 (MFHPIEEALD…IKDLIQYRYN (199 aa)) are DHBP synthase. Residues 26-27 (RE), D31, 138-142 (RAGHT), and E162 contribute to the D-ribulose 5-phosphate site. E27 contributes to the Mg(2+) binding site. Position 141 (H141) interacts with Mg(2+). A GTP cyclohydrolase II region spans residues 200–398 (LTTLVEREVD…MNKLGHLLHF (199 aa)). A GTP-binding site is contributed by 251–255 (RVHSE). Zn(2+)-binding residues include C256, C267, and C269. GTP contacts are provided by residues Q272, 294–296 (EGR), and T316. Catalysis depends on D328, which acts as the Proton acceptor; for GTP cyclohydrolase activity. Residue R330 is the Nucleophile; for GTP cyclohydrolase activity of the active site. Residues T351 and K356 each coordinate GTP.

It in the N-terminal section; belongs to the DHBP synthase family. In the C-terminal section; belongs to the GTP cyclohydrolase II family. Mg(2+) is required as a cofactor. The cofactor is Mn(2+). Zn(2+) serves as cofactor.

The enzyme catalyses D-ribulose 5-phosphate = (2S)-2-hydroxy-3-oxobutyl phosphate + formate + H(+). The catalysed reaction is GTP + 4 H2O = 2,5-diamino-6-hydroxy-4-(5-phosphoribosylamino)-pyrimidine + formate + 2 phosphate + 3 H(+). It functions in the pathway cofactor biosynthesis; riboflavin biosynthesis; 2-hydroxy-3-oxobutyl phosphate from D-ribulose 5-phosphate: step 1/1. The protein operates within cofactor biosynthesis; riboflavin biosynthesis; 5-amino-6-(D-ribitylamino)uracil from GTP: step 1/4. Catalyzes the conversion of D-ribulose 5-phosphate to formate and 3,4-dihydroxy-2-butanone 4-phosphate. Functionally, catalyzes the conversion of GTP to 2,5-diamino-6-ribosylamino-4(3H)-pyrimidinone 5'-phosphate (DARP), formate and pyrophosphate. In Bacillus subtilis (strain 168), this protein is Riboflavin biosynthesis protein RibBA.